Here is a 326-residue protein sequence, read N- to C-terminus: 3-dehydrosphinganine reductase TSC10A (326 aa).

The Lumenal portion of the chain corresponds to methionine 1–leucine 7. Residues phenylalanine 8–valine 28 form a helical membrane-spanning segment. Topologically, residues arginine 29–asparagine 264 are cytoplasmic. The NADPH site is built by glycine 46, serine 48, serine 49, glycine 50, arginine 71, lysine 75, and aspartate 97. The GXSXG motif lies at glycine 46 to glycine 50. Serine 174 (proton donor) is an active-site residue. Tyrosine 188 acts as the Proton acceptor in catalysis. NADP(+) contacts are provided by tyrosine 188 and lysine 192. Lysine 192 serves as the catalytic Lowers pKa of active site Tyr. The chain crosses the membrane as a helical span at residues phenylalanine 265–proline 285. Residues glutamine 286 to serine 288 lie on the Lumenal side of the membrane. Residues phenylalanine 289–phenylalanine 309 traverse the membrane as a helical segment. Residues glutamine 310–lysine 326 are Cytoplasmic-facing.

This sequence belongs to the short-chain dehydrogenases/reductases (SDR) family. In terms of tissue distribution, expressed in roots, leaves, stems, flowers and siliques.

The protein localises to the endoplasmic reticulum membrane. It catalyses the reaction sphinganine + NADP(+) = 3-oxosphinganine + NADPH + H(+). It participates in lipid metabolism; sphingolipid metabolism. Catalyzes the reduction of 3'-oxosphinganine (3-ketodihydrosphingosine/KDS) to sphinganine (dihydrosphingosine/DHS), the second step of de novo sphingolipid biosynthesis. In plants, sphingolipids seems to play a critical role in mineral ion homeostasis, most likely through their involvement in the ion transport functionalities of membrane systems in the root. Lacks stereospecificity and can also produce L-threo-DHS in addition to D-erythro-DHS. This chain is 3-dehydrosphinganine reductase TSC10A (TSC10A), found in Arabidopsis thaliana (Mouse-ear cress).